An 81-amino-acid chain; its full sequence is Putative membrane protein insertion efficiency factor (81 aa).

The segment at 60–81 (WNPGGYDPVPTHNTSNSSPMAE) is disordered. Residues 70-81 (THNTSNSSPMAE) are compositionally biased toward polar residues.

This sequence belongs to the UPF0161 family.

The protein localises to the cell inner membrane. In terms of biological role, could be involved in insertion of integral membrane proteins into the membrane. This Stutzerimonas stutzeri (strain A1501) (Pseudomonas stutzeri) protein is Putative membrane protein insertion efficiency factor.